Reading from the N-terminus, the 431-residue chain is Serine--tRNA ligase (431 aa).

An L-serine-binding site is contributed by 236-238 (TAE). 267-269 (RSE) lines the ATP pocket. E290 contributes to the L-serine binding site. 354–357 (EISS) is a binding site for ATP. An L-serine-binding site is contributed by S389.

The protein belongs to the class-II aminoacyl-tRNA synthetase family. Type-1 seryl-tRNA synthetase subfamily. Homodimer. The tRNA molecule binds across the dimer.

The protein localises to the cytoplasm. The catalysed reaction is tRNA(Ser) + L-serine + ATP = L-seryl-tRNA(Ser) + AMP + diphosphate + H(+). The enzyme catalyses tRNA(Sec) + L-serine + ATP = L-seryl-tRNA(Sec) + AMP + diphosphate + H(+). The protein operates within aminoacyl-tRNA biosynthesis; selenocysteinyl-tRNA(Sec) biosynthesis; L-seryl-tRNA(Sec) from L-serine and tRNA(Sec): step 1/1. Its function is as follows. Catalyzes the attachment of serine to tRNA(Ser). Is also able to aminoacylate tRNA(Sec) with serine, to form the misacylated tRNA L-seryl-tRNA(Sec), which will be further converted into selenocysteinyl-tRNA(Sec). The protein is Serine--tRNA ligase of Herminiimonas arsenicoxydans.